The sequence spans 322 residues: Solute carrier family 25 member 16 (322 aa).

Solcar repeat units lie at residues 34–120, 128–219, and 241–322; these read FYWL…YKTF, SGHV…LKSV, and LKTH…AVAF.

This sequence belongs to the mitochondrial carrier (TC 2.A.29) family.

It localises to the mitochondrion inner membrane. May be involved in the transport of coenzyme A in the mitochondrial matrix. Very little is known about the physiological function of this carrier. In Rattus norvegicus (Rat), this protein is Solute carrier family 25 member 16.